Reading from the N-terminus, the 575-residue chain is Sulfite reductase [NADPH] hemoprotein beta-component (575 aa).

[4Fe-4S] cluster-binding residues include Cys-439, Cys-445, Cys-484, and Cys-488. Residue Cys-488 participates in siroheme binding.

This sequence belongs to the nitrite and sulfite reductase 4Fe-4S domain family. Alpha(8)-beta(8). The alpha component is a flavoprotein, the beta component is a hemoprotein. Siroheme is required as a cofactor. It depends on [4Fe-4S] cluster as a cofactor.

The enzyme catalyses hydrogen sulfide + 3 NADP(+) + 3 H2O = sulfite + 3 NADPH + 4 H(+). Its pathway is sulfur metabolism; hydrogen sulfide biosynthesis; hydrogen sulfide from sulfite (NADPH route): step 1/1. In terms of biological role, component of the sulfite reductase complex that catalyzes the 6-electron reduction of sulfite to sulfide. This is one of several activities required for the biosynthesis of L-cysteine from sulfate. This is Sulfite reductase [NADPH] hemoprotein beta-component from Blochmanniella pennsylvanica (strain BPEN).